The primary structure comprises 470 residues: Glutamate--tRNA ligase (470 aa).

Residues 9 to 19 (PSPTGFLHVGG) carry the 'HIGH' region motif. A 'KMSKS' region motif is present at residues 236 to 240 (RLSKR). Position 239 (K239) interacts with ATP.

This sequence belongs to the class-I aminoacyl-tRNA synthetase family. Glutamate--tRNA ligase type 1 subfamily. Monomer.

It localises to the cytoplasm. It carries out the reaction tRNA(Glu) + L-glutamate + ATP = L-glutamyl-tRNA(Glu) + AMP + diphosphate. In terms of biological role, catalyzes the attachment of glutamate to tRNA(Glu) in a two-step reaction: glutamate is first activated by ATP to form Glu-AMP and then transferred to the acceptor end of tRNA(Glu). The chain is Glutamate--tRNA ligase from Legionella pneumophila subsp. pneumophila (strain Philadelphia 1 / ATCC 33152 / DSM 7513).